Here is a 253-residue protein sequence, read N- to C-terminus: 5'/3'-nucleotidase SurE (253 aa).

Asp8, Asp9, Ser39, and Asn92 together coordinate a divalent metal cation.

This sequence belongs to the SurE nucleotidase family. It depends on a divalent metal cation as a cofactor.

Its subcellular location is the cytoplasm. The catalysed reaction is a ribonucleoside 5'-phosphate + H2O = a ribonucleoside + phosphate. It carries out the reaction a ribonucleoside 3'-phosphate + H2O = a ribonucleoside + phosphate. The enzyme catalyses [phosphate](n) + H2O = [phosphate](n-1) + phosphate + H(+). In terms of biological role, nucleotidase with a broad substrate specificity as it can dephosphorylate various ribo- and deoxyribonucleoside 5'-monophosphates and ribonucleoside 3'-monophosphates with highest affinity to 3'-AMP. Also hydrolyzes polyphosphate (exopolyphosphatase activity) with the preference for short-chain-length substrates (P20-25). Might be involved in the regulation of dNTP and NTP pools, and in the turnover of 3'-mononucleotides produced by numerous intracellular RNases (T1, T2, and F) during the degradation of various RNAs. The protein is 5'/3'-nucleotidase SurE of Sodalis glossinidius (strain morsitans).